The following is a 421-amino-acid chain: Enolase 1 (421 aa).

(2R)-2-phosphoglycerate is bound at residue glutamine 164. The active-site Proton donor is the glutamate 206. 3 residues coordinate Mg(2+): aspartate 243, glutamate 287, and aspartate 314. Positions 339, 368, 369, and 390 each coordinate (2R)-2-phosphoglycerate. Lysine 339 serves as the catalytic Proton acceptor.

It belongs to the enolase family. Component of the RNA degradosome, a multiprotein complex involved in RNA processing and mRNA degradation. Mg(2+) serves as cofactor.

It is found in the cytoplasm. Its subcellular location is the secreted. The protein resides in the cell surface. It carries out the reaction (2R)-2-phosphoglycerate = phosphoenolpyruvate + H2O. Its pathway is carbohydrate degradation; glycolysis; pyruvate from D-glyceraldehyde 3-phosphate: step 4/5. Its function is as follows. Catalyzes the reversible conversion of 2-phosphoglycerate (2-PG) into phosphoenolpyruvate (PEP). It is essential for the degradation of carbohydrates via glycolysis. The chain is Enolase 1 from Methylococcus capsulatus (strain ATCC 33009 / NCIMB 11132 / Bath).